Here is a 159-residue protein sequence, read N- to C-terminus: Ribosomal RNA large subunit methyltransferase H (159 aa).

S-adenosyl-L-methionine contacts are provided by residues Ile-76, Gly-108, and 127–132 (FSKMTF).

It belongs to the RNA methyltransferase RlmH family. Homodimer.

Its subcellular location is the cytoplasm. The catalysed reaction is pseudouridine(1915) in 23S rRNA + S-adenosyl-L-methionine = N(3)-methylpseudouridine(1915) in 23S rRNA + S-adenosyl-L-homocysteine + H(+). Specifically methylates the pseudouridine at position 1915 (m3Psi1915) in 23S rRNA. The polypeptide is Ribosomal RNA large subunit methyltransferase H (Clostridium botulinum (strain Loch Maree / Type A3)).